The chain runs to 311 residues: D-allose-binding periplasmic protein (311 aa).

A signal peptide spans 1–23 (MNKYLKYFSGTLVGLMLSTSAFA).

Belongs to the bacterial solute-binding protein 2 family.

The protein resides in the periplasm. In terms of biological role, part of the binding-protein-dependent transport system AlsBAC for D-allose. This is D-allose-binding periplasmic protein (alsB) from Escherichia coli (strain K12).